A 137-amino-acid polypeptide reads, in one-letter code: uncharacterized protein (137 aa).

A helical membrane pass occupies residues 4–21; it reads ISWQIVLAVIGVVAGFII.

It is found in the membrane. This is an uncharacterized protein from Archaeoglobus fulgidus (strain ATCC 49558 / DSM 4304 / JCM 9628 / NBRC 100126 / VC-16).